A 395-amino-acid polypeptide reads, in one-letter code: ATP-dependent RNA helicase eIF4A (395 aa).

S2 bears the N-acetylserine mark. The Q motif signature appears at 22–50; the sequence is YKFDDMELDENLLRGVFGYGFEEPSAIQQ. The Helicase ATP-binding domain maps to 53-222; sequence IMPIIEGHDV…TKFMRNPVRI (170 aa). 66–73 contacts ATP; it reads AQSGTGKT. T73 is modified (phosphothreonine). Phosphoserine is present on residues S77 and S129. T146 carries the post-translational modification Phosphothreonine. A DEAD box motif is present at residues 170 to 173; the sequence is DEAD. The Helicase C-terminal domain occupies 233–394; that stretch reads GIKQFYVNVE…ELPSDIATLL (162 aa).

Belongs to the DEAD box helicase family. eIF4A subfamily. In terms of assembly, component of the eIF4F complex, which composition varies with external and internal environmental conditions. It is composed of at least eIF4A, eIF4E and eIF4G.

Its subcellular location is the cytoplasm. The catalysed reaction is ATP + H2O = ADP + phosphate + H(+). Functionally, ATP-dependent RNA helicase which is a subunit of the eIF4F complex involved in cap recognition and is required for mRNA binding to ribosome. In the current model of translation initiation, eIF4A unwinds RNA secondary structures in the 5'-UTR of mRNAs which is necessary to allow efficient binding of the small ribosomal subunit, and subsequent scanning for the initiator codon. The polypeptide is ATP-dependent RNA helicase eIF4A (TIF1) (Saccharomyces cerevisiae (strain YJM789) (Baker's yeast)).